Reading from the N-terminus, the 1245-residue chain is ATP-dependent helicase/deoxyribonuclease subunit B (1245 aa).

The interval 737 to 758 (WDDQNNAPTTDLPDRPNPRASE) is disordered. Residues 748–758 (LPDRPNPRASE) are compositionally biased toward basic and acidic residues.

This sequence belongs to the helicase family. AddB/RexB type 2 subfamily. In terms of assembly, heterodimer of AddA and RexB. Mg(2+) is required as a cofactor.

In terms of biological role, the heterodimer acts as both an ATP-dependent DNA helicase and an ATP-dependent, dual-direction single-stranded exonuclease. Recognizes the chi site generating a DNA molecule suitable for the initiation of homologous recombination. This subunit has 5' -&gt; 3' nuclease activity but not helicase activity. In Limosilactobacillus fermentum (strain NBRC 3956 / LMG 18251) (Lactobacillus fermentum), this protein is ATP-dependent helicase/deoxyribonuclease subunit B.